The following is a 721-amino-acid chain: Dipeptidyl-peptidase 7 (721 aa).

Residues 1–21 (MKKFKLLLLALMCVAFLPSKA) form the signal peptide. Catalysis depends on charge relay system residues H87, D228, and S656.

The protein belongs to the peptidase S46 family.

Functionally, catalyzes the removal of dipeptides from the N-terminus of oligopeptides. Most potently cleaves the synthetic substrate Met-Leu-methylcoumaryl-7-amide (Met-Leu-MCA), followed by Leu-Arg-MCA, while this enzyme does not hydrolyze Gly-Arg-, Gly-Gly-, Lys-Lys-, or Gly-Pro-MCA. This is Dipeptidyl-peptidase 7 (dpp7) from Phocaeicola vulgatus (strain ATCC 8482 / DSM 1447 / JCM 5826 / CCUG 4940 / NBRC 14291 / NCTC 11154) (Bacteroides vulgatus).